Consider the following 316-residue polypeptide: Putative phosphoribosylaminoimidazole-succinocarboxamide synthase 2 (316 aa).

The protein belongs to the SAICAR synthetase family.

It carries out the reaction 5-amino-1-(5-phospho-D-ribosyl)imidazole-4-carboxylate + L-aspartate + ATP = (2S)-2-[5-amino-1-(5-phospho-beta-D-ribosyl)imidazole-4-carboxamido]succinate + ADP + phosphate + 2 H(+). It functions in the pathway purine metabolism; IMP biosynthesis via de novo pathway; 5-amino-1-(5-phospho-D-ribosyl)imidazole-4-carboxamide from 5-amino-1-(5-phospho-D-ribosyl)imidazole-4-carboxylate: step 1/2. In Agrobacterium fabrum (strain C58 / ATCC 33970) (Agrobacterium tumefaciens (strain C58)), this protein is Putative phosphoribosylaminoimidazole-succinocarboxamide synthase 2 (purC2).